Here is a 485-residue protein sequence, read N- to C-terminus: Neuropeptide F receptor (485 aa).

Residues 1–91 (MIISMNQTEP…DSPWYHMLIS (91 aa)) are Extracellular-facing. A helical membrane pass occupies residues 92-112 (MYGVLIVFGALGNTLVVIAVI). At 113-122 (RKPIMRTARN) the chain is on the cytoplasmic side. A helical membrane pass occupies residues 123-143 (LFILNLAISDLLLCLVTMPLT). The Extracellular segment spans residues 144-163 (LMEILSKYWPYGSCSILCKT). A disulfide bridge links Cys-161 with Cys-248. The helical transmembrane segment at 164–184 (IAMLQALCIFVSTISITAIAF) threads the bilayer. Residues 185-202 (DRYQVIVYPTRDSLQFVG) are Cytoplasmic-facing. A helical membrane pass occupies residues 203–223 (AVTILAGIWALALLLASPLFV). At 224 to 262 (YKELINTDTPALLQQIGLQDTIPYCIEDWPSRNGRFYYS) the chain is on the extracellular side. A helical membrane pass occupies residues 263 to 283 (IFSLCVQYLVPILIVSVAYFG). Over 284-317 (IYNKLKSRITVVAVQASSAQRKVERGRRMKRTNC) the chain is Cytoplasmic. The helical transmembrane segment at 318-338 (LLISIAIIFGVSWLPLNFFNL) threads the bilayer. The Extracellular segment spans residues 339 to 355 (YADMERSPVTQSMLVRY). Residues 356–376 (AICHMIGMSSACSNPLLYGWL) form a helical membrane-spanning segment. Residues 377–485 (NDNFRKEFQE…PSEVTKLMPR (109 aa)) lie on the Cytoplasmic side of the membrane.

Belongs to the G-protein coupled receptor 1 family. Expressed in midgut, brain lobes and ventral nerve cord of larvae. In adults, expressed in a pair of dorsolateral neurons in the protocerebrum, and the central complex and a small number of neurons in the subesophageal ganglion (at protein level). Expressed in a subset of sugar-responsive PAIN neurons in the thoracic body but is absent from other peripheral PAIN neurons.

The protein localises to the membrane. Receptor for NPF. Integral part of the sensory system that mediates food signaling, providing the neural basis for the regulation of food response; coordinates larval foraging and social behavior changes during development. Required in dopaminergic (DA) neurons that innervate the mushroom body for satiety to suppress appetitive memory performance; a key factor in the internal state of hunger in the brain. NPF neurons coordinately modulate diverse sensory and motor neurons important for feeding, flight, and locomotion. NPF/NPFR pathway exerts its suppressive effect on larval aversion to diverse stressful stimuli (chemical stress and noxious heat) through attenuation of TRP channel-induced neuronal excitation. NPF neural signaling system plays a physiological role in acute modulation of alcohol sensitivity in adults, rather than a general response to intoxication by sedative agents. Activation and inhibition of the NPF system reduces and enhances ethanol preference, respectively. Sexual experience, the NPF system activity and ethanol consumption are all linked; sexual deprivation is a major contributor to enhanced ethanol preference. The protein is Neuropeptide F receptor of Drosophila melanogaster (Fruit fly).